Consider the following 118-residue polypeptide: Holo-[acyl-carrier-protein] synthase (118 aa).

Mg(2+) contacts are provided by Asp-8 and Glu-60.

The protein belongs to the P-Pant transferase superfamily. AcpS family. Mg(2+) is required as a cofactor.

The protein localises to the cytoplasm. The enzyme catalyses apo-[ACP] + CoA = holo-[ACP] + adenosine 3',5'-bisphosphate + H(+). In terms of biological role, transfers the 4'-phosphopantetheine moiety from coenzyme A to a Ser of acyl-carrier-protein. The protein is Holo-[acyl-carrier-protein] synthase of Wolbachia sp. subsp. Drosophila simulans (strain wRi).